The sequence spans 159 residues: Large ribosomal subunit protein uL10 (159 aa).

This sequence belongs to the universal ribosomal protein uL10 family. Part of the ribosomal stalk of the 50S ribosomal subunit. The N-terminus interacts with L11 and the large rRNA to form the base of the stalk. The C-terminus forms an elongated spine to which L12 dimers bind in a sequential fashion forming a multimeric L10(L12)X complex.

Forms part of the ribosomal stalk, playing a central role in the interaction of the ribosome with GTP-bound translation factors. This chain is Large ribosomal subunit protein uL10 (rplJ), found in Campylobacter jejuni subsp. jejuni serotype O:2 (strain ATCC 700819 / NCTC 11168).